We begin with the raw amino-acid sequence, 299 residues long: NAD(+) hydrolase PdTIR (299 aa).

Residues 164–297 (PPHDIFISHA…EIVADLMAII (134 aa)) enclose the TIR domain. Residues 173–174 (AW) and arginine 203 contribute to the NAD(+) site. Glutamate 239 is a catalytic residue.

As to quaternary structure, homodimer. Interacts with host MYD88.

It carries out the reaction NAD(+) + H2O = ADP-D-ribose + nicotinamide + H(+). In terms of biological role, NAD(+) hydrolase (NADase) that catalyzes cleavage of NAD(+) into ADP-D-ribose (ADPR) and nicotinamide. The chain is NAD(+) hydrolase PdTIR from Paracoccus denitrificans (strain Pd 1222).